The sequence spans 504 residues: Immunoglobulin-binding protein EibC (504 aa).

Positions 1–26 (MSKKFTMTLLSSSLAGLLVMSGGVSA) are cleaved as a signal peptide. Positions 27 to 413 (QEEKYTVPYA…IAANTRTLQQ (387 aa)) are surface exposed passenger domain. The Extracellular portion of the chain corresponds to 27-453 (QEEKYTVPYA…GLFQPYSVGK (427 aa)). Residues 154 to 280 (DAKASGEFSV…TGTESDKTYG (127 aa)) are head domain. The interval 281–296 (TRVLGGLSDGTRNSDA) is neck. A right-handed coiled-coil (RHcc) region spans residues 297–342 (ATVGQLNRKVGGVYDDVKARITVESEKQKKYTDQKTSEVNEKVEAR). Residues 343-368 (TTVGVDSDGKLTRAEGATKTIAVNDG) are saddle domain. The tract at residues 369-434 (LVALSGRTDR…INENHKEMKR (66 aa)) is left-handed coiled-coil (LHcc). A coiled-coil region spans residues 411–438 (LQQHSARLDSQQRQINENHKEMKRAAAQ). The interval 411-453 (LQQHSARLDSQQRQINENHKEMKRAAAQSAALTGLFQPYSVGK) is outer membrane translocation of the passenger domain. The next 4 beta stranded transmembrane spans lie at 454–464 (FNATAAVGGYS), 467–478 (QALAVGVGYRFN), 481–490 (TAAKAGVAFS), and 494–504 (ASWNVGVNFEF). Positions 454–504 (FNATAAVGGYSDQQALAVGVGYRFNEQTAAKAGVAFSDGDASWNVGVNFEF) are translocator domain.

The protein belongs to the autotransporter-2 (AT-2) (TC 1.B.40) family. Eib subfamily. Homotrimer; can probably form mixed heterotrimers in vivo. Will form mixed heterotrimers with EibD; these are correctly located in the outer membrane and bind IgG Fc, although less well than homotrimers. In denaturing gels runs as a band of about 200 kDa. Binds the Fc portion of immunoglobulins; binds more than 1 Fc per subunit.

The protein localises to the cell surface. The protein resides in the cell outer membrane. Its function is as follows. Binds (in a non-immune fashion) to the Fc portion of human IgG and less well to IgA; binding occurs on the cell surface. Confers the ability to survive exposure to human serum exposure. Binds to the Fc portion of human IgG and IgA and to whole mouse antibodies also via Fc. This chain is Immunoglobulin-binding protein EibC, found in Escherichia coli.